The primary structure comprises 445 residues: NAD-specific glutamate dehydrogenase (445 aa).

Lys124 is an active-site residue.

Belongs to the Glu/Leu/Phe/Val dehydrogenases family. In terms of assembly, homohexamer.

Its subcellular location is the cell surface. The enzyme catalyses L-glutamate + NAD(+) + H2O = 2-oxoglutarate + NH4(+) + NADH + H(+). In terms of biological role, probably involved in degradation rather than biosynthesis of glutamate. The polypeptide is NAD-specific glutamate dehydrogenase (gdh) (Porphyromonas gingivalis (strain ATCC 33277 / DSM 20709 / CIP 103683 / JCM 12257 / NCTC 11834 / 2561)).